Reading from the N-terminus, the 341-residue chain is MEEELKNFIIVWISAIISVSYCYYISANIKTGVLRLFSVLPICGLFFVLPLFFSSVHFSSSTAFYLSEMASLKLILFAFDQGPLFPVAPNLIQFVCFTCFPIKLQRNPKSQPSQNHFHKRAFAIKIMIFGVVLHVYNYSHFLPQTVLLSLCFLHLYVELEILLGPLKVLLSMALGCDLEPQFNKPYLATSLQDFWGRRWNLMVSSVLRSGIYNPVRCACQRPMNSGWARFMGYLVTFLVSGLFHELVYFYITRETPTWEVTLFFVLNGVCTGTEVAVKRTAFLQRWWPVRSSVSRLLTMGFVVVTGGLLFFPLFIRSGMMERRANETLFFLDFVKRKFSIF.

Helical transmembrane passes span 9–29 (IIVW…SANI), 36–56 (LFSV…FSSV), 82–102 (GPLF…CFPI), 122–142 (FAIK…SHFL), 146–166 (VLLS…LGPL), 231–251 (MGYL…YFYI), and 295–315 (RLLT…PLFI).

Belongs to the wax synthase family.

It localises to the membrane. The enzyme catalyses a long chain fatty alcohol + a fatty acyl-CoA = a wax ester + CoA. Functionally, catalyzes the final step in the synthesis of long-chain linear esters (waxes). This is Probable long-chain-alcohol O-fatty-acyltransferase 9 from Arabidopsis thaliana (Mouse-ear cress).